A 921-amino-acid chain; its full sequence is Inner nuclear membrane protein Man1 (921 aa).

The region spanning 7-51 (AAAPQQLSDEELFSQLRRYGLSPGPVTESTRPVYLKKLKKLREEE) is the LEM domain. S28 bears the Phosphoserine mark. Disordered regions lie at residues 47-97 (LREE…AYLR), 136-357 (SSDE…GGCG), and 374-395 (LAPL…PTGP). Low complexity-rich tracts occupy residues 53–62 (QQQQQQQQQQ) and 72–85 (TRNS…TAMG). S136, S137, and S140 each carry phosphoserine. Residues 217–237 (AAEDADEELADGEDRDPEAEE) are compositionally biased toward acidic residues. S261, S263, and S287 each carry phosphoserine. The segment covering 263 to 275 (SEEEEEEGEEDGD) has biased composition (acidic residues). Residues 308-317 (SGGSRQETSV) are compositionally biased toward polar residues. The segment covering 348–357 (PGGGGGGGCG) has biased composition (gly residues). S412 bears the Phosphoserine mark. Helical transmembrane passes span 486 to 506 (MFLL…YLGM) and 637 to 657 (AFIT…LVCV). Positions 709-921 (VRDSLIQPQD…TGLANSQGSS (213 aa)) are interaction with SMAD1, SMAD2, SMAD3 and SMAD5. The DNA-binding element occupies 717 to 736 (QDRKKMKKVWDRAVDFLAAN). S787 is modified (phosphoserine). T893 carries the post-translational modification Phosphothreonine. The residue at position 921 (S921) is a Phosphoserine.

In terms of assembly, interacts with SMAD1, SMAD2, SMAD3 and SMAD5. Binds to both phosphorylated and unphosphorylated R-SMADS.

The protein resides in the nucleus inner membrane. Its function is as follows. Can function as a specific repressor of TGF-beta, activin, and BMP signaling through its interaction with the R-SMAD proteins. Antagonizes TGF-beta-induced cell proliferation arrest. The polypeptide is Inner nuclear membrane protein Man1 (Lemd3) (Mus musculus (Mouse)).